A 391-amino-acid chain; its full sequence is Mannose-6-phosphate isomerase (391 aa).

The Zn(2+) site is built by glutamine 97, histidine 99, glutamate 134, and histidine 255. Arginine 274 is an active-site residue. Lysine 280 is modified (N6-acetyllysine).

Belongs to the mannose-6-phosphate isomerase type 1 family. Requires Zn(2+) as cofactor.

It is found in the cytoplasm. It catalyses the reaction D-mannose 6-phosphate = D-fructose 6-phosphate. Functionally, involved in the conversion of glucose to GDP-L-fucose, which can be converted to L-fucose, a capsular polysaccharide. The chain is Mannose-6-phosphate isomerase (manA) from Escherichia coli (strain K12).